The chain runs to 401 residues: Argininosuccinate synthase (401 aa).

ATP-binding positions include 9-17 and A35; that span reads AYSGGLDTS. Position 86 (Y86) interacts with L-citrulline. ATP is bound at residue G116. 3 residues coordinate L-aspartate: T118, N122, and D123. An L-citrulline-binding site is contributed by N122. R126, S175, S184, E261, and Y273 together coordinate L-citrulline.

Belongs to the argininosuccinate synthase family. Type 1 subfamily. Homotetramer.

It is found in the cytoplasm. The enzyme catalyses L-citrulline + L-aspartate + ATP = 2-(N(omega)-L-arginino)succinate + AMP + diphosphate + H(+). It functions in the pathway amino-acid biosynthesis; L-arginine biosynthesis; L-arginine from L-ornithine and carbamoyl phosphate: step 2/3. This Aquifex aeolicus (strain VF5) protein is Argininosuccinate synthase.